The primary structure comprises 98 residues: MNLYDVIKKPVITESSMAQLEAGKYVFEVDTRAHKLLIKQAVEAAFEGVKVANVNTINVKPKAKRVGRYTGFTNKTKKAIITLTADSKAIELFGAEAE.

The protein belongs to the universal ribosomal protein uL23 family. In terms of assembly, part of the 50S ribosomal subunit. Contacts protein L29, and trigger factor when it is bound to the ribosome.

Its function is as follows. One of the early assembly proteins it binds 23S rRNA. One of the proteins that surrounds the polypeptide exit tunnel on the outside of the ribosome. Forms the main docking site for trigger factor binding to the ribosome. This is Large ribosomal subunit protein uL23 from Streptococcus gordonii (strain Challis / ATCC 35105 / BCRC 15272 / CH1 / DL1 / V288).